A 428-amino-acid chain; its full sequence is tRNA modification GTPase MnmE (428 aa).

(6S)-5-formyl-5,6,7,8-tetrahydrofolate contacts are provided by R20, E76, and R116. A TrmE-type G domain is found at 212-351 (GFEVAIIGAP…LVEALQDRLL (140 aa)). N222 serves as a coordination point for K(+). GTP is bound by residues 222–227 (NAGKST), 241–247 (SEVAGTT), and 266–269 (DTAG). S226 contributes to the Mg(2+) binding site. The K(+) site is built by S241, V243, and T246. Residue T247 coordinates Mg(2+). K428 serves as a coordination point for (6S)-5-formyl-5,6,7,8-tetrahydrofolate.

Belongs to the TRAFAC class TrmE-Era-EngA-EngB-Septin-like GTPase superfamily. TrmE GTPase family. Homodimer. Heterotetramer of two MnmE and two MnmG subunits. Requires K(+) as cofactor.

The protein resides in the cytoplasm. In terms of biological role, exhibits a very high intrinsic GTPase hydrolysis rate. Involved in the addition of a carboxymethylaminomethyl (cmnm) group at the wobble position (U34) of certain tRNAs, forming tRNA-cmnm(5)s(2)U34. The sequence is that of tRNA modification GTPase MnmE from Cereibacter sphaeroides (strain ATCC 17025 / ATH 2.4.3) (Rhodobacter sphaeroides).